We begin with the raw amino-acid sequence, 56 residues long: MAYVINDSCISCGACEPECPVNAITAGDDKYVIDAATCIDCGACAGVCPVDAPQPE.

4Fe-4S ferredoxin-type domains lie at 2–29 (AYVI…AGDD) and 29–56 (DKYV…PQPE). Residues cysteine 9, cysteine 12, cysteine 15, cysteine 19, cysteine 38, cysteine 41, cysteine 44, and cysteine 48 each coordinate [4Fe-4S] cluster.

[4Fe-4S] cluster serves as cofactor.

Functionally, ferredoxins are iron-sulfur proteins that transfer electrons in a wide variety of metabolic reactions. This Acetoanaerobium sticklandii (strain ATCC 12662 / DSM 519 / JCM 1433 / CCUG 9281 / NCIMB 10654 / HF) (Clostridium sticklandii) protein is Ferredoxin.